Here is a 981-residue protein sequence, read N- to C-terminus: Ubiquitin carboxyl-terminal hydrolase 37 (981 aa).

The KEN box 1 signature appears at Lys-32–Asn-34. 2 consecutive short sequence motifs (D-box) follow at residues Arg-71–Asn-79 and Arg-96–Asn-105. Residues Met-111–Pro-308 form a disordered region. At Ser-114 the chain carries Phosphoserine. Residues Arg-135–Arg-148 are compositionally biased toward polar residues. A compositionally biased stretch (basic and acidic residues) spans Gly-149–Phe-159. The D-box 3 motif lies at Arg-160–Arg-168. Ser-170 is modified (phosphoserine). The span at Lys-172 to Leu-195 shows a compositional bias: polar residues. At Ser-212 the chain carries Phosphoserine. A KEN box 2 motif is present at residues Lys-223–Asn-225. Positions Ser-245–Arg-259 are enriched in basic and acidic residues. Residues Leu-266–Ala-300 are compositionally biased toward polar residues. Positions Gln-343–Lys-953 constitute a USP domain. Cys-352 serves as the catalytic Nucleophile. The residue at position 630 (Ser-630) is a Phosphoserine; by CDK2. Residues Ser-652 and Ser-654 each carry the phosphoserine modification. Disordered regions lie at residues Gly-673 to Gly-704 and Lys-719 to Glu-831. Basic and acidic residues-rich tracts occupy residues Lys-683–Leu-697 and Lys-719–Pro-734. Positions Ser-706–Thr-725 constitute a UIM 1 domain. Residue Ser-772 is modified to Phosphoserine. A compositionally biased stretch (basic and acidic residues) spans Ile-776 to Thr-788. Positions Lys-784–Asn-786 match the KEN box 3 motif. UIM domains follow at residues Arg-808–Trp-827 and Lys-830–Ser-849. The segment covering Leu-813 to Gln-824 has biased composition (low complexity). The active-site Proton acceptor is His-908.

It belongs to the peptidase C19 family. Interacts with FZR1/CDH1. Interacts with CDT1. Polyubiquitinated via 'Lys-11'-linked ubiquitin by the APC(CDH1) complex during late mitosis, leading to its degradation. Able to mediate auto-deubiquitination. In terms of processing, phosphorylated at Ser-630 by CDK2 during G1/S phase but not during mitosis; phosphorylation at Ser-630 is required for deubiquitinase activity. Also polyubiquitinated during early G1 phase, without leading to degradation. Phosphorylated at Ser-114 by ATM following DNA damage, which in turn increases its deubiquitination activity towards BLM.

The protein localises to the nucleus. It localises to the chromosome. The enzyme catalyses Thiol-dependent hydrolysis of ester, thioester, amide, peptide and isopeptide bonds formed by the C-terminal Gly of ubiquitin (a 76-residue protein attached to proteins as an intracellular targeting signal).. In terms of biological role, deubiquitinase that plays a role in different processes including cell cycle regulation, DNA replication or DNA damage response. Antagonizes the anaphase-promoting complex (APC/C) during G1/S transition by mediating deubiquitination of cyclin-A (CCNA1 and CCNA2), thereby promoting S phase entry. Specifically mediates deubiquitination of 'Lys-11'-linked polyubiquitin chains, a specific ubiquitin-linkage type mediated by the APC/C complex. Phosphorylation at Ser-628 during G1/S phase maximizes the deubiquitinase activity, leading to prevent degradation of cyclin-A (CCNA1 and CCNA2). Plays an important role in the regulation of DNA replication by stabilizing the licensing factor CDT1. Also plays an essential role beyond S-phase entry to promote the efficiency and fidelity of replication by deubiquitinating checkpoint kinase 1/CHK1, promoting its stability. Sustains the DNA damage response (DDR) by deubiquitinating and stabilizing the ATP-dependent DNA helicase BLM. Mechanistically, DNA double-strand breaks (DSB) promotes ATM-mediated phosphorylation of USP37 and enhances the binding between USP37 and BLM. Promotes cell migration by deubiquitinating and stabilizing the epithelial-mesenchymal transition (EMT)-inducing transcription factor SNAI. Plays a role in the regulation of mitotic spindle assembly and mitotic progression by associating with chromatin-associated WAPL and stabilizing it through deubiquitination. The polypeptide is Ubiquitin carboxyl-terminal hydrolase 37 (USP37) (Canis lupus familiaris (Dog)).